The chain runs to 544 residues: Phenylalanine--tRNA ligase beta subunit (544 aa).

The B5 domain maps to 268-343 (LIHKIQNVRE…MSIGYNNLEP (76 aa)). Asp321, Asp327, Glu330, and Asp331 together coordinate Mg(2+).

Belongs to the phenylalanyl-tRNA synthetase beta subunit family. Type 2 subfamily. In terms of assembly, tetramer of two alpha and two beta subunits. It depends on Mg(2+) as a cofactor.

It is found in the cytoplasm. The catalysed reaction is tRNA(Phe) + L-phenylalanine + ATP = L-phenylalanyl-tRNA(Phe) + AMP + diphosphate + H(+). This chain is Phenylalanine--tRNA ligase beta subunit, found in Saccharolobus solfataricus (strain ATCC 35092 / DSM 1617 / JCM 11322 / P2) (Sulfolobus solfataricus).